A 198-amino-acid polypeptide reads, in one-letter code: Small ribosomal subunit protein uS4 (198 aa).

Residues 88–153 (LRLDNVMFRM…AQRYKDILEV (66 aa)) enclose the S4 RNA-binding domain.

The protein belongs to the universal ribosomal protein uS4 family. In terms of assembly, part of the 30S ribosomal subunit. Contacts protein S5. The interaction surface between S4 and S5 is involved in control of translational fidelity.

Its function is as follows. One of the primary rRNA binding proteins, it binds directly to 16S rRNA where it nucleates assembly of the body of the 30S subunit. In terms of biological role, with S5 and S12 plays an important role in translational accuracy. This Lachnoclostridium phytofermentans (strain ATCC 700394 / DSM 18823 / ISDg) (Clostridium phytofermentans) protein is Small ribosomal subunit protein uS4.